Consider the following 214-residue polypeptide: Phosphoribosylglycinamide formyltransferase (214 aa).

Residue 12–14 (GSN) participates in N(1)-(5-phospho-beta-D-ribosyl)glycinamide binding. (6R)-10-formyltetrahydrofolate is bound by residues 105-108 (LLIL) and asparagine 123. The Proton donor role is filled by histidine 125. (6R)-10-formyltetrahydrofolate is bound at residue aspartate 167. Glutamate 197 contacts N(1)-(5-phospho-beta-D-ribosyl)glycinamide.

Belongs to the GART family.

It carries out the reaction N(1)-(5-phospho-beta-D-ribosyl)glycinamide + (6R)-10-formyltetrahydrofolate = N(2)-formyl-N(1)-(5-phospho-beta-D-ribosyl)glycinamide + (6S)-5,6,7,8-tetrahydrofolate + H(+). It functions in the pathway purine metabolism; IMP biosynthesis via de novo pathway; N(2)-formyl-N(1)-(5-phospho-D-ribosyl)glycinamide from N(1)-(5-phospho-D-ribosyl)glycinamide (10-formyl THF route): step 1/1. This chain is Phosphoribosylglycinamide formyltransferase, found in Saccharomyces cerevisiae (strain ATCC 204508 / S288c) (Baker's yeast).